The chain runs to 172 residues: Stellate protein CG33247 (172 aa).

Belongs to the casein kinase 2 subunit beta family. As to quaternary structure, interacts in vitro with the casein kinase 2 alpha subunit (CkII-alpha). The relevance of such interaction is however unclear in vivo. As to expression, probably not expressed in wild-type flies. In males lacking the Y chromosome, it is testis-specific and constitutes the main component of star-shaped crystals.

Unknown. In males lacking the Y chromosome, its strong overexpression leads to the appearance of proteinaceous star-shaped crystals in the primary spermatocytes causing meiotic drive, possibly by interfering with normal casein kinase 2 activity. This Drosophila melanogaster (Fruit fly) protein is Stellate protein CG33247 (Ste:CG33247).